Reading from the N-terminus, the 901-residue chain is Protein translocase subunit SecA 1 (901 aa).

ATP-binding positions include Gln87, 105 to 109 (GEGKT), and Asp500. The tract at residues 847 to 901 (LNHPESGSWGGEGEGPSSEGAPHLPFKRDGEKVGRNQACPCGSGKKYKQCCGKLS) is disordered. Positions 885, 887, 896, and 897 each coordinate Zn(2+).

It belongs to the SecA family. In terms of assembly, monomer and homodimer. Part of the essential Sec protein translocation apparatus which comprises SecA, SecYEG and auxiliary proteins SecDF-YajC and YidC. Zn(2+) serves as cofactor.

The protein localises to the cell inner membrane. It localises to the cytoplasm. The enzyme catalyses ATP + H2O + cellular proteinSide 1 = ADP + phosphate + cellular proteinSide 2.. Part of the Sec protein translocase complex. Interacts with the SecYEG preprotein conducting channel. Has a central role in coupling the hydrolysis of ATP to the transfer of proteins into and across the cell membrane, serving both as a receptor for the preprotein-SecB complex and as an ATP-driven molecular motor driving the stepwise translocation of polypeptide chains across the membrane. This Magnetococcus marinus (strain ATCC BAA-1437 / JCM 17883 / MC-1) protein is Protein translocase subunit SecA 1.